A 106-amino-acid chain; its full sequence is Large ribosomal subunit protein eL30 (106 aa).

This sequence belongs to the eukaryotic ribosomal protein eL30 family.

The protein is Large ribosomal subunit protein eL30 of Methanococcus maripaludis (strain C7 / ATCC BAA-1331).